A 134-amino-acid chain; its full sequence is Shikimate kinase (134 aa).

Belongs to the shikimate kinase family.

It is found in the cytoplasm. The catalysed reaction is shikimate + ATP = 3-phosphoshikimate + ADP + H(+). The protein operates within metabolic intermediate biosynthesis; chorismate biosynthesis; chorismate from D-erythrose 4-phosphate and phosphoenolpyruvate: step 5/7. The polypeptide is Shikimate kinase (aroK) (Neisseria gonorrhoeae).